The primary structure comprises 168 residues: Ecotin (168 aa).

The first 21 residues, 1–21 (MKRLSIAITSLLMAASASTIA), serve as a signal peptide directing secretion. An intrachain disulfide couples Cys-76 to Cys-113.

The protein belongs to the protease inhibitor I11 (ecotin) family. As to quaternary structure, homodimer.

The protein localises to the periplasm. Functionally, general inhibitor of pancreatic serine proteases: inhibits chymotrypsin, trypsin, elastases, factor X, kallikrein as well as a variety of other proteases. This Yersinia enterocolitica serotype O:8 / biotype 1B (strain NCTC 13174 / 8081) protein is Ecotin.